The chain runs to 88 residues: MAHKKGTGSTRNGRDSNSKRLGVKAYGGETVTAGSILIRQRGTSVLPGVNVGQGKDDTLFALTDGVVAFESIRRSLRNRKRISVVASS.

The segment at 1 to 24 (MAHKKGTGSTRNGRDSNSKRLGVK) is disordered.

This sequence belongs to the bacterial ribosomal protein bL27 family.

In Prochlorococcus marinus (strain MIT 9313), this protein is Large ribosomal subunit protein bL27.